The following is a 211-amino-acid chain: Uracil phosphoribosyltransferase (211 aa).

Residues Arg-78, Arg-103, and 130-138 contribute to the 5-phospho-alpha-D-ribose 1-diphosphate site; that span reads DPMLATGGT. Uracil is bound by residues Ile-195 and 200 to 202; that span reads GDA. Residue Asp-201 participates in 5-phospho-alpha-D-ribose 1-diphosphate binding.

It belongs to the UPRTase family. Mg(2+) is required as a cofactor.

The catalysed reaction is UMP + diphosphate = 5-phospho-alpha-D-ribose 1-diphosphate + uracil. Its pathway is pyrimidine metabolism; UMP biosynthesis via salvage pathway; UMP from uracil: step 1/1. With respect to regulation, allosterically activated by GTP. In terms of biological role, catalyzes the conversion of uracil and 5-phospho-alpha-D-ribose 1-diphosphate (PRPP) to UMP and diphosphate. The protein is Uracil phosphoribosyltransferase of Pseudarthrobacter chlorophenolicus (strain ATCC 700700 / DSM 12829 / CIP 107037 / JCM 12360 / KCTC 9906 / NCIMB 13794 / A6) (Arthrobacter chlorophenolicus).